A 417-amino-acid polypeptide reads, in one-letter code: MMPTQRLAEADPQIAKLIREETRRQAEGLELIASENFVSPAVLEALGSTLTNKYAEGYPGKRYYGGCEVVDQVEQLAIDRAKQLFGADHANVQPHAGSQANMAAYFALAKPGDTVLAMSLNFGGHLTHGSPVNFSGKLFKIVPYGLRQSDETIDMDEVARLAREHRPRILMVGASAYSRTLHFDRFAEIANEVGAAMVVDMAHIAGLVAAGLHPSPVPHSEIVTTTTHKTLRGPRGGMILCREAHAKTLNSQIFPGIQGGPLEHVIAAKAVAFGEALRPEFKAYQRRIVENAQVLAEGLKSAGLRLVSGGTDNHLMLVDLRPKKLTGKIAEEALGRAGITVNKNMIPWDPEKPMTTSGIRVGTPALTTRGMGSREMTLVAALIGRVLDAPADEQVLARVRGEVKDLCAHFPMYADRV.

(6S)-5,6,7,8-tetrahydrofolate-binding positions include leucine 120 and 124–126; that span reads GHL. An N6-(pyridoxal phosphate)lysine modification is found at lysine 229.

Belongs to the SHMT family. Homodimer. Pyridoxal 5'-phosphate is required as a cofactor.

It is found in the cytoplasm. It catalyses the reaction (6R)-5,10-methylene-5,6,7,8-tetrahydrofolate + glycine + H2O = (6S)-5,6,7,8-tetrahydrofolate + L-serine. Its pathway is one-carbon metabolism; tetrahydrofolate interconversion. It functions in the pathway amino-acid biosynthesis; glycine biosynthesis; glycine from L-serine: step 1/1. Its function is as follows. Catalyzes the reversible interconversion of serine and glycine with tetrahydrofolate (THF) serving as the one-carbon carrier. This reaction serves as the major source of one-carbon groups required for the biosynthesis of purines, thymidylate, methionine, and other important biomolecules. Also exhibits THF-independent aldolase activity toward beta-hydroxyamino acids, producing glycine and aldehydes, via a retro-aldol mechanism. The chain is Serine hydroxymethyltransferase from Anaeromyxobacter sp. (strain K).